The chain runs to 94 residues: Large ribosomal subunit protein bL27 (94 aa).

Positions 1–9 (MLKLNLQFF) are excised as a propeptide. Residues 12-32 (KKGVSSTKNGRDSESKRLGAK) are disordered. Residues 20–32 (NGRDSESKRLGAK) show a composition bias toward basic and acidic residues.

The protein belongs to the bacterial ribosomal protein bL27 family. In terms of processing, the N-terminus is cleaved by ribosomal processing cysteine protease Prp.

This Staphylococcus carnosus (strain TM300) protein is Large ribosomal subunit protein bL27.